Here is a 90-residue protein sequence, read N- to C-terminus: Probable Fe(2+)-trafficking protein (90 aa).

Belongs to the Fe(2+)-trafficking protein family.

Could be a mediator in iron transactions between iron acquisition and iron-requiring processes, such as synthesis and/or repair of Fe-S clusters in biosynthetic enzymes. In Coxiella burnetii (strain CbuK_Q154) (Coxiella burnetii (strain Q154)), this protein is Probable Fe(2+)-trafficking protein.